Reading from the N-terminus, the 262-residue chain is Alpha-tubulin N-acetyltransferase 1 (262 aa).

The N-acetyltransferase domain maps to 1–177; that stretch reads MQVDADLRPI…TNFVVFEELF (177 aa). Acetyl-CoA is bound at residue 111 to 124; sequence FYVHFSCQRQGVGQ.

Belongs to the acetyltransferase ATAT1 family. Expressed solely in touch receptor neurons.

The catalysed reaction is L-lysyl-[alpha-tubulin] + acetyl-CoA = N(6)-acetyl-L-lysyl-[alpha-tubulin] + CoA + H(+). Functionally, specifically acetylates 'Lys-40' in alpha-tubulin/mec-12 on the lumenal side of microtubules. Promotes microtubule destabilization and accelerates microtubule dynamics; this activity may be independent of acetylation activity. Acetylates alpha-tubulin with a slow enzymatic rate, due to a catalytic site that is not optimized for acetyl transfer. Enters the microtubule through each end and diffuses quickly throughout the lumen of microtubules. Acetylates only long/old microtubules because of its slow acetylation rate since it does not have time to act on dynamically unstable microtubules before the enzyme is released. Required for the maintenance of touch receptor neurons and possibly other type of neurons involved in locomotion. Regulates the number and localization of mitochondria in mechanosensory neurons. Plays a role in axonal transport. The sequence is that of Alpha-tubulin N-acetyltransferase 1 from Caenorhabditis elegans.